Here is a 393-residue protein sequence, read N- to C-terminus: Branched-chain-amino-acid aminotransferase, mitochondrial (393 aa).

The N-terminal 27 residues, 1–27 (MAAATLGQVWARKLLPVPWLLCGSKRC), are a transit peptide targeting the mitochondrion. Y169 provides a ligand contact to substrate. An N6-(pyridoxal phosphate)lysine modification is found at K230. At K322 the chain carries N6-acetyllysine.

It belongs to the class-IV pyridoxal-phosphate-dependent aminotransferase family. Homodimer. The cofactor is pyridoxal 5'-phosphate.

It is found in the mitochondrion. It catalyses the reaction L-leucine + 2-oxoglutarate = 4-methyl-2-oxopentanoate + L-glutamate. It carries out the reaction L-isoleucine + 2-oxoglutarate = (S)-3-methyl-2-oxopentanoate + L-glutamate. The catalysed reaction is L-valine + 2-oxoglutarate = 3-methyl-2-oxobutanoate + L-glutamate. Catalyzes the first reaction in the catabolism of the essential branched chain amino acids leucine, isoleucine, and valine. May also function as a transporter of branched chain alpha-keto acids. This Mus musculus (Mouse) protein is Branched-chain-amino-acid aminotransferase, mitochondrial (Bcat2).